Consider the following 311-residue polypeptide: Pyrimidine-specific ribonucleoside hydrolase RihA (311 aa).

The active site involves His240.

This sequence belongs to the IUNH family. RihA subfamily.

Its function is as follows. Hydrolyzes with equal efficiency cytidine or uridine to ribose and cytosine or uracil, respectively. The protein is Pyrimidine-specific ribonucleoside hydrolase RihA of Escherichia coli O8 (strain IAI1).